A 297-amino-acid polypeptide reads, in one-letter code: MKRETFRYRGDMDLDGFLREMERVGALGAGRLGRAARILEKMWSSDDVTVLLTVAGPAVAGGLGELFERLIREGLVDAVITSGANVVHDALDALGGIHVCLGERNVDGYGRVHDTHIPTEAFEKFEHFMREVLSDLSGRVSCRELLWEMGKRLESGFLRAAADEGVPIYSPGILDSMVGLHVWIHSQDHDFHLDLVDDMHHLADLVFEAEELGAIILGGSVPKHFAMGAAMLRGGLDYAVQITMDRPETGSLSGAPLEEGKSWEKVREDAEVATIVGDYLIIFPLLASGVMQRLGIV.

Catalysis depends on lysine 265, which acts as the Nucleophile.

The protein belongs to the deoxyhypusine synthase family. NAD(+) is required as a cofactor.

It carries out the reaction [eIF5A protein]-L-lysine + spermidine = [eIF5A protein]-deoxyhypusine + propane-1,3-diamine. It participates in protein modification; eIF5A hypusination. Functionally, catalyzes the NAD-dependent oxidative cleavage of spermidine and the subsequent transfer of the butylamine moiety of spermidine to the epsilon-amino group of a specific lysine residue of the eIF-5A precursor protein to form the intermediate deoxyhypusine residue. This chain is Probable deoxyhypusine synthase, found in Methanopyrus kandleri (strain AV19 / DSM 6324 / JCM 9639 / NBRC 100938).